The primary structure comprises 280 residues: 3-dehydroshikimate dehydratase (280 aa).

Substrate contacts are provided by Tyr-70, Arg-102, and Glu-142. Residue Glu-142 coordinates Mn(2+). His-144 functions as the Proton acceptor in the catalytic mechanism. Residues Asp-172 and His-175 each coordinate substrate. Residue Asp-172 coordinates Mn(2+). A Mn(2+)-binding site is contributed by His-198. 2 residues coordinate substrate: Tyr-217 and Glu-253. Glu-253 contacts Mn(2+).

Homodimer. Mn(2+) is required as a cofactor.

It carries out the reaction 3-dehydroshikimate = 3,4-dihydroxybenzoate + H2O. It participates in aromatic compound metabolism; 3,4-dihydroxybenzoate biosynthesis; 3,4-dihydroxybenzoate from 3-dehydroquinate: step 2/2. Its pathway is siderophore biosynthesis; petrobactin biosynthesis. Functionally, involved in the biosynthesis of petrobactin, a catecholate siderophore that functions in both iron acquisition and virulence. Catalyzes the conversion of 3-dehydroshikimate to 3,4-dihydroxybenzoate (3,4-DHBA). The protein is 3-dehydroshikimate dehydratase of Bacillus anthracis.